Here is a 198-residue protein sequence, read N- to C-terminus: Nucleoside triphosphate pyrophosphatase (198 aa).

The active-site Proton acceptor is Asp-75.

The protein belongs to the Maf family. A divalent metal cation is required as a cofactor.

The protein localises to the cytoplasm. The catalysed reaction is a ribonucleoside 5'-triphosphate + H2O = a ribonucleoside 5'-phosphate + diphosphate + H(+). The enzyme catalyses a 2'-deoxyribonucleoside 5'-triphosphate + H2O = a 2'-deoxyribonucleoside 5'-phosphate + diphosphate + H(+). In terms of biological role, nucleoside triphosphate pyrophosphatase. May have a dual role in cell division arrest and in preventing the incorporation of modified nucleotides into cellular nucleic acids. In Hyphomonas neptunium (strain ATCC 15444), this protein is Nucleoside triphosphate pyrophosphatase.